The chain runs to 287 residues: Pyridoxal kinase PdxY (287 aa).

Substrate contacts are provided by residues Ser-10 and 45-46 (TQ). ATP contacts are provided by residues Asp-112, Ala-144, Glu-149, Lys-182, and 209 to 212 (RPLV). Asp-224 contributes to the substrate binding site.

It belongs to the pyridoxine kinase family. PdxY subfamily. Homodimer. Requires Mg(2+) as cofactor.

The catalysed reaction is pyridoxal + ATP = pyridoxal 5'-phosphate + ADP + H(+). Its pathway is cofactor metabolism; pyridoxal 5'-phosphate salvage; pyridoxal 5'-phosphate from pyridoxal: step 1/1. Pyridoxal kinase involved in the salvage pathway of pyridoxal 5'-phosphate (PLP). Catalyzes the phosphorylation of pyridoxal to PLP. This chain is Pyridoxal kinase PdxY, found in Escherichia coli (strain UTI89 / UPEC).